The following is a 324-amino-acid chain: Beta-ketoacyl-[acyl-carrier-protein] synthase III (324 aa).

Catalysis depends on residues Cys112 and His249. The segment at 250–254 (QANDR) is ACP-binding. Asn279 is a catalytic residue.

Belongs to the thiolase-like superfamily. FabH family. Homodimer.

Its subcellular location is the cytoplasm. The catalysed reaction is malonyl-[ACP] + acetyl-CoA + H(+) = 3-oxobutanoyl-[ACP] + CO2 + CoA. It functions in the pathway lipid metabolism; fatty acid biosynthesis. Functionally, catalyzes the condensation reaction of fatty acid synthesis by the addition to an acyl acceptor of two carbons from malonyl-ACP. Catalyzes the first condensation reaction which initiates fatty acid synthesis and may therefore play a role in governing the total rate of fatty acid production. Possesses both acetoacetyl-ACP synthase and acetyl transacylase activities. Its substrate specificity determines the biosynthesis of branched-chain and/or straight-chain of fatty acids. The sequence is that of Beta-ketoacyl-[acyl-carrier-protein] synthase III from Streptococcus pneumoniae serotype 2 (strain D39 / NCTC 7466).